Here is a 96-residue protein sequence, read N- to C-terminus: Accessory cholera enterotoxin (96 aa).

A helical membrane pass occupies residues 76–96 (QALAIVLQALMTRFALRALNL).

The protein localises to the secreted. Its subcellular location is the host cell membrane. Functionally, increases short-circuit current in rabbit ileal tissue mounted in Ussing chambers, by increasing the potential difference. Cultures of V.cholerae containing the cloned ace gene cause fluid secretion in ligated rabbit ileal loops. This is Accessory cholera enterotoxin (ace) from Vibrio cholerae serotype O1 (strain ATCC 39315 / El Tor Inaba N16961).